Consider the following 129-residue polypeptide: uncharacterized protein (129 aa).

2 consecutive transmembrane segments (helical) span residues 35 to 55 and 98 to 118; these read IVDGAFGPVSLLFWLLGWKIP and ILLLNALCFRVKILLCAIILL.

Its subcellular location is the membrane. This is an uncharacterized protein from Saccharomyces cerevisiae (strain ATCC 204508 / S288c) (Baker's yeast).